A 380-amino-acid polypeptide reads, in one-letter code: Guanine nucleotide-binding protein subunit beta (380 aa).

WD repeat units follow at residues 64–94 (GHSG…IVWN), 106–136 (LHCP…SIFN), 155–186 (GHKG…VLWD), 203–234 (GHTA…RLWD), 247–277 (GHED…RLFD), 296–326 (NELP…YVWD), and 342–372 (SHDG…KIWA).

This sequence belongs to the WD repeat G protein beta family. In terms of assembly, g proteins are composed of 3 units, alpha, beta and gamma. In terms of tissue distribution, present in the root, leaf and tassel.

Its function is as follows. Guanine nucleotide-binding proteins (G proteins) are involved as a modulator or transducer in various transmembrane signaling systems. The beta and gamma chains are required for the GTPase activity, for replacement of GDP by GTP, and for G protein-effector interaction. This Zea mays (Maize) protein is Guanine nucleotide-binding protein subunit beta (GB1).